Consider the following 121-residue polypeptide: Large ribosomal subunit protein bL12 (121 aa).

It belongs to the bacterial ribosomal protein bL12 family. As to quaternary structure, homodimer. Part of the ribosomal stalk of the 50S ribosomal subunit. Forms a multimeric L10(L12)X complex, where L10 forms an elongated spine to which 2 to 4 L12 dimers bind in a sequential fashion. Binds GTP-bound translation factors.

In terms of biological role, forms part of the ribosomal stalk which helps the ribosome interact with GTP-bound translation factors. Is thus essential for accurate translation. This Lactococcus lactis subsp. lactis (strain IL1403) (Streptococcus lactis) protein is Large ribosomal subunit protein bL12.